The following is a 499-amino-acid chain: FAD-dependent oxidoreductase domain-containing protein 1 (499 aa).

Residues 75–95 form a helical membrane-spanning segment; that stretch reads ERADVVIVGGGVMGWSIAYWL.

FAD is required as a cofactor.

It localises to the mitochondrion inner membrane. In terms of biological role, required for the assembly of the mitochondrial membrane respiratory chain NADH dehydrogenase (Complex I). Involved in mid-late stages of complex I assembly. This is FAD-dependent oxidoreductase domain-containing protein 1 (foxred1) from Xenopus laevis (African clawed frog).